We begin with the raw amino-acid sequence, 285 residues long: Bifunctional protein FolD (285 aa).

NADP(+) is bound by residues 165 to 167 (GRS) and Ser-190.

The protein belongs to the tetrahydrofolate dehydrogenase/cyclohydrolase family. As to quaternary structure, homodimer.

The enzyme catalyses (6R)-5,10-methylene-5,6,7,8-tetrahydrofolate + NADP(+) = (6R)-5,10-methenyltetrahydrofolate + NADPH. The catalysed reaction is (6R)-5,10-methenyltetrahydrofolate + H2O = (6R)-10-formyltetrahydrofolate + H(+). Its pathway is one-carbon metabolism; tetrahydrofolate interconversion. Functionally, catalyzes the oxidation of 5,10-methylenetetrahydrofolate to 5,10-methenyltetrahydrofolate and then the hydrolysis of 5,10-methenyltetrahydrofolate to 10-formyltetrahydrofolate. This chain is Bifunctional protein FolD, found in Streptococcus pneumoniae serotype 4 (strain ATCC BAA-334 / TIGR4).